We begin with the raw amino-acid sequence, 221 residues long: Arginine ABC transporter permease protein ArtQ (221 aa).

The region spanning 13–206 (ALMTLGLAVC…AVTLISQVGI (194 aa)) is the ABC transmembrane type-1 domain. The next 5 helical transmembrane spans lie at 17–37 (LGLAVCSLLLGLFLSLIFAVL), 49–69 (VFVALLRGLPEIIVVLLVYFG), 82–102 (IEFGAFGCGVLALSLIFAAYA), 121–141 (GAALGLSKSYTFIHIVMPQVW), and 186–206 (TWYGIAALIYLAVTLISQVGI).

This sequence belongs to the binding-protein-dependent transport system permease family. HisMQ subfamily. As to quaternary structure, the complex is composed of two ATP-binding proteins (ArtP), two transmembrane proteins (ArtM and ArtQ) and a solute-binding protein (ArtI).

It is found in the cell inner membrane. Its function is as follows. Part of the ABC transporter complex ArtPIQM involved in arginine transport. Probably responsible for the translocation of the substrate across the membrane. The sequence is that of Arginine ABC transporter permease protein ArtQ (artQ) from Haemophilus influenzae (strain ATCC 51907 / DSM 11121 / KW20 / Rd).